The primary structure comprises 212 residues: Thymidylate kinase (212 aa).

ATP is bound at residue 10-17; it reads GPDGAGKS.

This sequence belongs to the thymidylate kinase family.

The catalysed reaction is dTMP + ATP = dTDP + ADP. Its function is as follows. Phosphorylation of dTMP to form dTDP in both de novo and salvage pathways of dTTP synthesis. This Lactobacillus helveticus (strain DPC 4571) protein is Thymidylate kinase.